Reading from the N-terminus, the 527-residue chain is Heat shock factor protein HSF8 (527 aa).

The segment covering 1 to 13 (MEPNSSGSGKAAV) has biased composition (low complexity). 5 disordered regions span residues 1 to 37 (MEPNSSGSGKAAVGDGGGGGAPMLQPAPAPAPMPSAN), 130 to 160 (RRKPAHGHAQQQQQPHGHAQQQMQPPGHSAS), 243 to 275 (NESNKRIAEGSKKRRIKQDIESQDPSVTPADGQ), 300 to 343 (SPRL…TSGK), and 476 to 501 (QSPSSPDAAMDDDISNTSETKPQING). Pro residues predominate over residues 25–37 (QPAPAPAPMPSAN). Residues 39–133 (PPPFLVKTYD…LLKSISRRKP (95 aa)) mediate DNA binding. Over residues 136–157 (GHAQQQQQPHGHAQQQMQPPGH) the composition is skewed to low complexity. Polar residues-rich tracts occupy residues 319 to 328 (SPQSNASSGR) and 491 to 501 (NTSETKPQING).

This sequence belongs to the HSF family. As to quaternary structure, homotrimer. Exhibits temperature-dependent phosphorylation.

The protein localises to the nucleus. DNA-binding protein that specifically binds heat shock promoter elements (HSE) and activates transcription. The chain is Heat shock factor protein HSF8 (HSF8) from Solanum peruvianum (Peruvian tomato).